The sequence spans 509 residues: Histidine--tRNA ligase, cytoplasmic (509 aa).

At Ala-2 the chain carries N-acetylalanine. In terms of domain architecture, WHEP-TRS spans 3 to 59 (ERAALEELVKLQGERVRGLKQQKASAELIEEEVAKLLKLKAQLGPDESKQKFVLKTP). The residue at position 66 (Ser-66) is a Phosphoserine. Residues 130 to 132 (DLT), Arg-157, Gln-173, Asp-177, Arg-326, and 330 to 331 (YY) each bind L-histidine. Ser-356 is subject to Phosphoserine.

It belongs to the class-II aminoacyl-tRNA synthetase family. As to quaternary structure, homodimer.

It localises to the cytoplasm. The catalysed reaction is tRNA(His) + L-histidine + ATP = L-histidyl-tRNA(His) + AMP + diphosphate + H(+). In terms of biological role, catalyzes the ATP-dependent ligation of histidine to the 3'-end of its cognate tRNA, via the formation of an aminoacyl-adenylate intermediate (His-AMP). Plays a role in axon guidance. This is Histidine--tRNA ligase, cytoplasmic (HARS1) from Pongo abelii (Sumatran orangutan).